The sequence spans 106 residues: ATP-dependent Clp protease adapter protein ClpS (106 aa).

This sequence belongs to the ClpS family. In terms of assembly, binds to the N-terminal domain of the chaperone ClpA.

In terms of biological role, involved in the modulation of the specificity of the ClpAP-mediated ATP-dependent protein degradation. The protein is ATP-dependent Clp protease adapter protein ClpS of Yersinia pestis bv. Antiqua (strain Antiqua).